Consider the following 389-residue polypeptide: Glycerol-3-phosphate dehydrogenase [NAD(+)] 2 (389 aa).

NAD(+) is bound by residues 40-45 (GSGNWG), phenylalanine 128, lysine 151, and alanine 184. Lysine 151 provides a ligand contact to substrate. Lysine 244 acts as the Proton acceptor in catalysis. The NAD(+) site is built by arginine 309 and glutamine 338. Substrate is bound at residue 309–310 (RN).

It belongs to the NAD-dependent glycerol-3-phosphate dehydrogenase family.

It is found in the cytoplasm. It carries out the reaction sn-glycerol 3-phosphate + NAD(+) = dihydroxyacetone phosphate + NADH + H(+). This Zygosaccharomyces rouxii protein is Glycerol-3-phosphate dehydrogenase [NAD(+)] 2 (GPD2).